The sequence spans 365 residues: Zinc finger protein lsy-2 (365 aa).

A disordered region spans residues 1 to 36 (MLTRRNAKQSQRNSADQSLSEFNSSSMTHGSNQSVY). The segment covering 8–36 (KQSQRNSADQSLSEFNSSSMTHGSNQSVY) has biased composition (polar residues). C2H2-type zinc fingers lie at residues 78 to 100 (HQCNVCNKIFVSYKGLQQHAVIH), 106 to 128 (FRCDICSKSFRFKSNLFEHRSVH), 134 to 156 (HACPYCGKTCRLKGNLKKHLRTH), 264 to 287 (HDCPVCKSQFMTRMDCVSHHTLEH), and 296 to 318 (FFCEKCYRPFADEASYNQHMSYH).

It is found in the nucleus speckle. Functionally, involved in transcriptional regulation. Required to specify left-right asymmetry of the ASE gustatory neurons, probably acting upstream of microRNA lsy-6. Involved in maintaining the distinction between somatic and germ cells, perhaps acting by repressing germ cell-specific genes in somatic cells. This chain is Zinc finger protein lsy-2, found in Caenorhabditis elegans.